A 360-amino-acid chain; its full sequence is 3-dehydroquinate synthase (360 aa).

Residues 70-75 (DGEKYK), 104-108 (GVIGD), 128-129 (TT), lysine 141, and lysine 150 each bind NAD(+). Glutamate 183, histidine 246, and histidine 263 together coordinate Zn(2+).

This sequence belongs to the sugar phosphate cyclases superfamily. Dehydroquinate synthase family. Co(2+) serves as cofactor. Requires Zn(2+) as cofactor. It depends on NAD(+) as a cofactor.

The protein resides in the cytoplasm. The enzyme catalyses 7-phospho-2-dehydro-3-deoxy-D-arabino-heptonate = 3-dehydroquinate + phosphate. The protein operates within metabolic intermediate biosynthesis; chorismate biosynthesis; chorismate from D-erythrose 4-phosphate and phosphoenolpyruvate: step 2/7. Catalyzes the conversion of 3-deoxy-D-arabino-heptulosonate 7-phosphate (DAHP) to dehydroquinate (DHQ). This is 3-dehydroquinate synthase from Acinetobacter baumannii (strain SDF).